Reading from the N-terminus, the 89-residue chain is MAKKAKVQKELKRQELVAQYAEKRKELKEKGDYVALAKLPRDSAPSRLTRRCRKTGRPRGVLRDFELSRIAFRELAHKGQIPGVKKASW.

It belongs to the universal ribosomal protein uS14 family. Part of the 30S ribosomal subunit. Contacts proteins S3 and S10.

In terms of biological role, binds 16S rRNA, required for the assembly of 30S particles and may also be responsible for determining the conformation of the 16S rRNA at the A site. This Shouchella clausii (strain KSM-K16) (Alkalihalobacillus clausii) protein is Small ribosomal subunit protein uS14.